We begin with the raw amino-acid sequence, 842 residues long: Type VI secretion system spike protein VgrG2a (842 aa).

A disordered region spans residues 265–291 (RSGAGRPFSESRLRGHRRDARVASVSG).

The protein belongs to the VgrG protein family.

Functionally, part of the H2 type VI secretion system (H2-T6SS) specialized secretion system, which delivers several virulence factors in both prokaryotic and eukaryotic cells during infection. May form the spike at the tip of the elongating tube formed by haemolysin co-regulated protein 2a/Hcp2a. In turn, may allow the delivery of the Tle4 antibacterial toxin to target cells where it exerts its toxicity. Also promotes the release of VgrG2b toxin to the host cell. The sequence is that of Type VI secretion system spike protein VgrG2a from Pseudomonas aeruginosa (strain ATCC 15692 / DSM 22644 / CIP 104116 / JCM 14847 / LMG 12228 / 1C / PRS 101 / PAO1).